The chain runs to 206 residues: Tumor protein D54 (206 aa).

Residue M1 is modified to N-acetylmethionine. Positions 1–14 (MDSAGQDINLNSPN) are enriched in polar residues. The disordered stretch occupies residues 1-24 (MDSAGQDINLNSPNKGLLSDSMTD). A phosphoserine mark is found at S3, S12, S19, and S21. Positions 38–82 (VEGLTEAEEEELRAELTKVEEEIVTLRQVLAAKERHCGELKRRLG) form a coiled coil. Residues S96, S149, and S161 each carry the phosphoserine modification. Position 163 is a phosphothreonine (T163). S166 is modified (phosphoserine). T173 bears the Phosphothreonine mark. The span at 175 to 185 (KSKVVGDRENG) shows a compositional bias: basic and acidic residues. A disordered region spans residues 175 to 206 (KSKVVGDRENGSDSLPSSAGSGDKPLSDPAPF). S192 and S195 each carry phosphoserine.

The protein belongs to the TPD52 family. As to quaternary structure, forms a homodimer or heterodimer with other members of the family. Interacts with MAL2.

The protein is Tumor protein D54 (TPD52L2) of Pongo abelii (Sumatran orangutan).